The chain runs to 216 residues: Adenylate kinase (216 aa).

10-15 provides a ligand contact to ATP; the sequence is GAGKGT. The segment at 30-59 is NMP; that stretch reads STGDMFRAAMKAETEMGLQAKSFIDKGALV. Residues T31, R36, 57 to 59, 85 to 88, and Q92 contribute to the AMP site; these read ALV and GFPR. Residues 126–163 form an LID region; that stretch reads GRRICKECGATYHLEFNPPAKADVCDKCGGELYQRSDD. An ATP-binding site is contributed by R127. Zn(2+) contacts are provided by C130 and C133. 136–137 is an ATP binding site; the sequence is TY. 2 residues coordinate Zn(2+): C150 and C153. Positions 160 and 171 each coordinate AMP. Q199 contributes to the ATP binding site.

Belongs to the adenylate kinase family. In terms of assembly, monomer.

The protein localises to the cytoplasm. It carries out the reaction AMP + ATP = 2 ADP. Its pathway is purine metabolism; AMP biosynthesis via salvage pathway; AMP from ADP: step 1/1. Catalyzes the reversible transfer of the terminal phosphate group between ATP and AMP. Plays an important role in cellular energy homeostasis and in adenine nucleotide metabolism. This chain is Adenylate kinase, found in Bacillus cereus (strain ATCC 10987 / NRS 248).